The chain runs to 538 residues: Chaperonin GroEL 1 (538 aa).

Residues 29–32 (TLGP), 86–90 (DGTTT), Gly413, 478–480 (NAA), and Asp494 contribute to the ATP site.

The protein belongs to the chaperonin (HSP60) family. As to quaternary structure, forms a cylinder of 14 subunits composed of two heptameric rings stacked back-to-back. Interacts with the co-chaperonin GroES.

The protein resides in the cytoplasm. It catalyses the reaction ATP + H2O + a folded polypeptide = ADP + phosphate + an unfolded polypeptide.. Together with its co-chaperonin GroES, plays an essential role in assisting protein folding. The GroEL-GroES system forms a nano-cage that allows encapsulation of the non-native substrate proteins and provides a physical environment optimized to promote and accelerate protein folding. This is Chaperonin GroEL 1 from Corynebacterium glutamicum (strain R).